The sequence spans 714 residues: Choline transporter-like protein 5 (714 aa).

The Cytoplasmic portion of the chain corresponds to 1 to 33 (MGRRSAAPTSPFGEPRKFDPKFKGPIGKRHCTD). The chain crosses the membrane as a helical span at residues 34 to 54 (VLCCIIFVVVILGYIALGVVA). Over 55–237 (WIHGDPRKII…KIFEDYASSW (183 aa)) the chain is Extracellular. Residues Asn-83, Asn-132, Asn-192, and Asn-205 are each glycosylated (N-linked (GlcNAc...) asparagine). The chain crosses the membrane as a helical span at residues 238 to 258 (YWILIALFIAMVVSLLFLILL). The Cytoplasmic portion of the chain corresponds to 259–261 (RFT). Residues 262–282 (AGVFFWIFIIGVIGVVGYGIW) form a helical membrane-spanning segment. Topologically, residues 283 to 320 (HCFWEYDSLKGVPGADLTIYDIGLQTDFRVYLQLRQTW) are extracellular. The helical transmembrane segment at 321-341 (LAFMILLCIVEVIIILMLIFL) threads the bilayer. The Cytoplasmic segment spans residues 342 to 346 (RNRIR). The helical transmembrane segment at 347–367 (IAIALLQEGSRAIGYIMSTLF) threads the bilayer. At 368–369 (YP) the chain is on the extracellular side. Residues 370–390 (IITFILIAICISYWAVTAVFM) form a helical membrane-spanning segment. Over 391–455 (ATSGEPIYKV…QYILIFQLCN (65 aa)) the chain is Cytoplasmic. A helical transmembrane segment spans residues 456–476 (VFVFLWLVNFSIALGQCTLAG). At 477–510 (AFASYYWAFKKPADIPACPLFSSFGRAIRYHTGS) the chain is on the extracellular side. Residues 511–531 (LALGSLILALVQFIRIILEYL) traverse the membrane as a helical segment. The Cytoplasmic segment spans residues 532 to 605 (DHKLKASQNS…RVAVLDKVTD (74 aa)). A helical membrane pass occupies residues 606–626 (FLLFLGKVFVTGSVGVLAFFF). Residues 627–644 (FTRKIPVLTDEAPALNYY) lie on the Extracellular side of the membrane. The helical transmembrane segment at 645 to 665 (WVPLLTVLIGSYLIAHGFFSV) threads the bilayer. At 666–711 (YAMCVDTLFLCFCEDLERNNGSSSKPYYMSPNLHRILGKKEILSKK) the chain is on the cytoplasmic side.

The protein belongs to the CTL (choline transporter-like) family.

The protein resides in the cell membrane. The catalysed reaction is choline(out) + n H(+)(in) = choline(in) + n H(+)(out). Its function is as follows. Choline/H+ antiporter. The polypeptide is Choline transporter-like protein 5 (slc44a5) (Xenopus tropicalis (Western clawed frog)).